Reading from the N-terminus, the 150-residue chain is D-aminoacyl-tRNA deacylase (150 aa).

The short motif at Gly-138 to Pro-139 is the Gly-cisPro motif, important for rejection of L-amino acids element.

Belongs to the DTD family. In terms of assembly, homodimer.

Its subcellular location is the cytoplasm. It carries out the reaction glycyl-tRNA(Ala) + H2O = tRNA(Ala) + glycine + H(+). The enzyme catalyses a D-aminoacyl-tRNA + H2O = a tRNA + a D-alpha-amino acid + H(+). An aminoacyl-tRNA editing enzyme that deacylates mischarged D-aminoacyl-tRNAs. Also deacylates mischarged glycyl-tRNA(Ala), protecting cells against glycine mischarging by AlaRS. Acts via tRNA-based rather than protein-based catalysis; rejects L-amino acids rather than detecting D-amino acids in the active site. By recycling D-aminoacyl-tRNA to D-amino acids and free tRNA molecules, this enzyme counteracts the toxicity associated with the formation of D-aminoacyl-tRNA entities in vivo and helps enforce protein L-homochirality. The polypeptide is D-aminoacyl-tRNA deacylase (Thermosipho melanesiensis (strain DSM 12029 / CIP 104789 / BI429)).